The sequence spans 184 residues: Photosystem I assembly protein Ycf4 (184 aa).

The next 2 membrane-spanning stretches (helical) occupy residues 22–42 (FCWAFILFLGSLGFLLVGTSS) and 57–77 (IIFFPQGIVMSFYGIAGLFIS).

The protein belongs to the Ycf4 family.

It is found in the plastid. The protein resides in the chloroplast thylakoid membrane. Seems to be required for the assembly of the photosystem I complex. The protein is Photosystem I assembly protein Ycf4 of Olimarabidopsis pumila (Dwarf rocket).